The primary structure comprises 165 residues: NADPH-dependent 7-cyano-7-deazaguanine reductase (165 aa).

C56 acts as the Thioimide intermediate in catalysis. D63 serves as the catalytic Proton donor. Substrate-binding positions include 78–80 and 97–98; these read VES and HE.

The protein belongs to the GTP cyclohydrolase I family. QueF type 1 subfamily.

The protein localises to the cytoplasm. The catalysed reaction is 7-aminomethyl-7-carbaguanine + 2 NADP(+) = 7-cyano-7-deazaguanine + 2 NADPH + 3 H(+). It functions in the pathway tRNA modification; tRNA-queuosine biosynthesis. Functionally, catalyzes the NADPH-dependent reduction of 7-cyano-7-deazaguanine (preQ0) to 7-aminomethyl-7-deazaguanine (preQ1). The protein is NADPH-dependent 7-cyano-7-deazaguanine reductase of Bacillus pumilus (strain SAFR-032).